The primary structure comprises 514 residues: 2-isopropylmalate synthase (514 aa).

Residues 5-267 (LIIFDTTLRD…HTDIETREIV (263 aa)) enclose the Pyruvate carboxyltransferase domain. 4 residues coordinate Mn(2+): D14, H202, H204, and N238. A regulatory domain region spans residues 393–514 (KLVALRVCSE…QRTHPQVGDV (122 aa)).

It belongs to the alpha-IPM synthase/homocitrate synthase family. LeuA type 1 subfamily. In terms of assembly, homodimer. The cofactor is Mn(2+).

The protein resides in the cytoplasm. It catalyses the reaction 3-methyl-2-oxobutanoate + acetyl-CoA + H2O = (2S)-2-isopropylmalate + CoA + H(+). The protein operates within amino-acid biosynthesis; L-leucine biosynthesis; L-leucine from 3-methyl-2-oxobutanoate: step 1/4. In terms of biological role, catalyzes the condensation of the acetyl group of acetyl-CoA with 3-methyl-2-oxobutanoate (2-ketoisovalerate) to form 3-carboxy-3-hydroxy-4-methylpentanoate (2-isopropylmalate). In Methylococcus capsulatus (strain ATCC 33009 / NCIMB 11132 / Bath), this protein is 2-isopropylmalate synthase.